A 103-amino-acid polypeptide reads, in one-letter code: Large ribosomal subunit protein bL21 (103 aa).

The protein belongs to the bacterial ribosomal protein bL21 family. In terms of assembly, part of the 50S ribosomal subunit. Contacts protein L20.

Its function is as follows. This protein binds to 23S rRNA in the presence of protein L20. In Legionella pneumophila (strain Lens), this protein is Large ribosomal subunit protein bL21.